We begin with the raw amino-acid sequence, 418 residues long: Glutamyl-tRNA reductase (418 aa).

Residues 49–52, Ser-108, 113–115, and Gln-119 each bind substrate; these read TCNR and EPQ. The Nucleophile role is filled by Cys-50. Residue 188 to 193 coordinates NADP(+); the sequence is GAGETI.

This sequence belongs to the glutamyl-tRNA reductase family. As to quaternary structure, homodimer.

The enzyme catalyses (S)-4-amino-5-oxopentanoate + tRNA(Glu) + NADP(+) = L-glutamyl-tRNA(Glu) + NADPH + H(+). It functions in the pathway porphyrin-containing compound metabolism; protoporphyrin-IX biosynthesis; 5-aminolevulinate from L-glutamyl-tRNA(Glu): step 1/2. Catalyzes the NADPH-dependent reduction of glutamyl-tRNA(Glu) to glutamate 1-semialdehyde (GSA). The chain is Glutamyl-tRNA reductase from Aliivibrio salmonicida (strain LFI1238) (Vibrio salmonicida (strain LFI1238)).